The primary structure comprises 89 residues: Small ribosomal subunit protein uS15 (89 aa).

This sequence belongs to the universal ribosomal protein uS15 family. Part of the 30S ribosomal subunit. Forms a bridge to the 50S subunit in the 70S ribosome, contacting the 23S rRNA.

In terms of biological role, one of the primary rRNA binding proteins, it binds directly to 16S rRNA where it helps nucleate assembly of the platform of the 30S subunit by binding and bridging several RNA helices of the 16S rRNA. Forms an intersubunit bridge (bridge B4) with the 23S rRNA of the 50S subunit in the ribosome. This chain is Small ribosomal subunit protein uS15, found in Bifidobacterium longum (strain DJO10A).